A 580-amino-acid chain; its full sequence is Tyrosyl-DNA phosphodiesterase 1 (580 aa).

Residues 65 to 117 (ATNKEQEAHSSSSKPAVTAPVASGSSSSGSLDTNPSGSSASGPAASQDTSNLA) form a disordered region. The segment covering 87 to 110 (SGSSSSGSLDTNPSGSSASGPAAS) has biased composition (low complexity). H248 acts as the Nucleophile in catalysis. K250 is a substrate binding site. An interaction with DNA region spans residues 387–390 (SIGS). The Proton donor/acceptor role is filled by H479. K481 lines the substrate pocket.

This sequence belongs to the tyrosyl-DNA phosphodiesterase family. In terms of tissue distribution, expressed in the body and at higher levels in the head. Expressed in the delaminating neuroblasts and a few ganglion mother cells in stage 11-14 embryonic central nervous system. Weak expression is seen in gonads at stage 16. Expressed in the brain; expression is regulated by DIP2.

It localises to the nucleus. The protein resides in the cytoplasm. Its function is as follows. DNA repair enzyme that can remove a variety of covalent adducts from DNA through hydrolysis of a 3'-phosphodiester bond, giving rise to DNA with a free 3' phosphate. Catalyzes the hydrolysis of dead-end complexes between DNA and the topoisomerase I active site tyrosine residue. Hydrolyzes 3'-phosphoglycolates on protruding 3' ends on DNA double-strand breaks due to DNA damage by radiation and free radicals. Acts on blunt-ended double-strand DNA breaks and on single-stranded DNA. May have low 3'exonuclease activity and may be able to remove a single nucleoside from the 3'end of DNA and RNA molecules with 3'hydroxyl groups. Has no exonuclease activity towards DNA or RNA with a 3'phosphate. Required for normal polarization of epidermal cells, correct subcellular location of the Crb complex to the apical lateral membrane, and for normal neuronal development during embryonic development. Contributes to maintenance of epithelial cells in response to topoisomerase-1-mediated and oxidative DNA damage. Required for precise axonal bifurcation in mushroom body neurons. Required for maintenance of normal neuronal function. This is Tyrosyl-DNA phosphodiesterase 1 from Drosophila melanogaster (Fruit fly).